Reading from the N-terminus, the 345-residue chain is Flap endonuclease 1 (345 aa).

Positions 1–103 (MGIKQLSKLL…KELEKRKERR (103 aa)) are N-domain. Asp34 contributes to the Mg(2+) binding site. The DNA site is built by Arg47 and Arg69. 5 residues coordinate Mg(2+): Asp85, Glu157, Glu159, Asp178, and Asp180. The segment at 121–252 (LMEMYDKRKT…KKALGLIKKH (132 aa)) is I-domain. Glu157 lines the DNA pocket. DNA is bound by residues Gly230 and Asp232. Residue Asp232 coordinates Mg(2+). Positions 333–341 (TQGRLDCFI) are interaction with PCNA.

It belongs to the XPG/RAD2 endonuclease family. FEN1 subfamily. In terms of assembly, interacts with PCNA. Three molecules of FEN1 bind to one PCNA trimer with each molecule binding to one PCNA monomer. PCNA stimulates the nuclease activity without altering cleavage specificity. Mg(2+) is required as a cofactor. In terms of processing, phosphorylated. Phosphorylation upon DNA damage induces relocalization to the nuclear plasma.

Its subcellular location is the nucleus. The protein localises to the nucleolus. It localises to the nucleoplasm. It is found in the mitochondrion. Structure-specific nuclease with 5'-flap endonuclease and 5'-3' exonuclease activities involved in DNA replication and repair. During DNA replication, cleaves the 5'-overhanging flap structure that is generated by displacement synthesis when DNA polymerase encounters the 5'-end of a downstream Okazaki fragment. It enters the flap from the 5'-end and then tracks to cleave the flap base, leaving a nick for ligation. Also involved in the long patch base excision repair (LP-BER) pathway, by cleaving within the apurinic/apyrimidinic (AP) site-terminated flap. Acts as a genome stabilization factor that prevents flaps from equilibrating into structures that lead to duplications and deletions. Also possesses 5'-3' exonuclease activity on nicked or gapped double-stranded DNA, and exhibits RNase H activity. Also involved in replication and repair of rDNA and in repairing mitochondrial DNA. In Encephalitozoon cuniculi (strain GB-M1) (Microsporidian parasite), this protein is Flap endonuclease 1.